A 503-amino-acid chain; its full sequence is Probable cytosol aminopeptidase (503 aa).

Positions 270 and 275 each coordinate Mn(2+). The active site involves Lys-282. The Mn(2+) site is built by Asp-293, Asp-352, and Glu-354. Arg-356 is an active-site residue.

It belongs to the peptidase M17 family. Mn(2+) serves as cofactor.

It localises to the cytoplasm. It carries out the reaction Release of an N-terminal amino acid, Xaa-|-Yaa-, in which Xaa is preferably Leu, but may be other amino acids including Pro although not Arg or Lys, and Yaa may be Pro. Amino acid amides and methyl esters are also readily hydrolyzed, but rates on arylamides are exceedingly low.. The catalysed reaction is Release of an N-terminal amino acid, preferentially leucine, but not glutamic or aspartic acids.. Presumably involved in the processing and regular turnover of intracellular proteins. Catalyzes the removal of unsubstituted N-terminal amino acids from various peptides. In Shigella dysenteriae serotype 1 (strain Sd197), this protein is Probable cytosol aminopeptidase.